Here is a 341-residue protein sequence, read N- to C-terminus: uncharacterized protein (341 aa).

The next 4 helical transmembrane spans lie at 8-28, 63-83, 171-191, and 317-337; these read LMLT…PLII, LMYF…VFAL, IYIM…IALS, and EFLV…KIFL. One can recognise a VWFA domain in the interval 101 to 305; sequence DIVIVLDISP…SKKENLERKI (205 aa).

Its subcellular location is the cell membrane. This is an uncharacterized protein from Borreliella burgdorferi (strain ATCC 35210 / DSM 4680 / CIP 102532 / B31) (Borrelia burgdorferi).